Consider the following 700-residue polypeptide: AP-2 complex subunit beta (700 aa).

Residues 625–700 (VGNSFPPTGA…RKLSMKRPFS (76 aa)) are disordered. The residue at position 649 (Ser-649) is a Phosphoserine. Thr-652 is modified (phosphothreonine). The span at 653 to 663 (AMMDDYDKPAE) shows a compositional bias: basic and acidic residues. Phosphoserine is present on Ser-683.

This sequence belongs to the adaptor complexes large subunit family. As to quaternary structure, adaptor protein complex 2 (AP-2) is a heterotetramer composed of two large adaptins (alpha-type subunit APL3 and beta-type subunit APL1), a medium chain (mu-type subunit APM4) and a small adaptin (sigma-type subunit APS2). Interacts with APS2.

It localises to the cell membrane. Its subcellular location is the membrane. It is found in the coated pit. Functionally, adaptins are components of the adaptor complexes which link clathrin to receptors in coated vesicles. Clathrin-associated protein complexes are believed to interact with the cytoplasmic tails of membrane proteins, leading to their selection and concentration. Beta adaptin is a subunit of the plasma membrane adaptor. The protein is AP-2 complex subunit beta (APL1) of Saccharomyces cerevisiae (strain ATCC 204508 / S288c) (Baker's yeast).